Here is a 212-residue protein sequence, read N- to C-terminus: Pyridoxine/pyridoxamine 5'-phosphate oxidase (212 aa).

Residues 8–11 (RREY) and Lys-66 contribute to the substrate site. FMN contacts are provided by residues 61–66 (RIVLLK), 76–77 (FT), Arg-82, Lys-83, and Gln-105. Positions 123, 127, and 131 each coordinate substrate. Residues 140-141 (QS) and Trp-185 contribute to the FMN site. Residue 191–193 (RLH) participates in substrate binding. An FMN-binding site is contributed by Arg-195.

This sequence belongs to the pyridoxamine 5'-phosphate oxidase family. In terms of assembly, homodimer. It depends on FMN as a cofactor.

The catalysed reaction is pyridoxamine 5'-phosphate + O2 + H2O = pyridoxal 5'-phosphate + H2O2 + NH4(+). It catalyses the reaction pyridoxine 5'-phosphate + O2 = pyridoxal 5'-phosphate + H2O2. Its pathway is cofactor metabolism; pyridoxal 5'-phosphate salvage; pyridoxal 5'-phosphate from pyridoxamine 5'-phosphate: step 1/1. It functions in the pathway cofactor metabolism; pyridoxal 5'-phosphate salvage; pyridoxal 5'-phosphate from pyridoxine 5'-phosphate: step 1/1. In terms of biological role, catalyzes the oxidation of either pyridoxine 5'-phosphate (PNP) or pyridoxamine 5'-phosphate (PMP) into pyridoxal 5'-phosphate (PLP). In Shewanella pealeana (strain ATCC 700345 / ANG-SQ1), this protein is Pyridoxine/pyridoxamine 5'-phosphate oxidase.